The chain runs to 283 residues: MELERIVSAALLAFVQTHLPEADLSGLDDVIFSYVLGVLGDLGPSGPSEENFDMEAFTEMMEAYVPGFAHIPRGTIGDMIQKLSGQLSGARNKENVQPQSSEVQGQVSISPEPLQRPEKLKEETMSSAGDTQDEAAGPEEELLPGVDVLLEVFPTCSVEQAQWVLAKARGDLEEAVQMLVEGKQGPPAWDGPNQDLPRRLRGPQKDELKSFILQKYMMVDSAEDQKIHRPMAPKEAPKKLIRYIDNQIVSTKGERFKDVRNPEAEEMKATYINLKPARKYRFH.

Over residues 87-109 (LSGARNKENVQPQSSEVQGQVSI) the composition is skewed to polar residues. The tract at residues 87 to 139 (LSGARNKENVQPQSSEVQGQVSISPEPLQRPEKLKEETMSSAGDTQDEAAGPE) is disordered. Position 110 is a phosphoserine (S110). Positions 115–124 (QRPEKLKEET) are enriched in basic and acidic residues. The CUE domain maps to 141 to 184 (ELLPGVDVLLEVFPTCSVEQAQWVLAKARGDLEEAVQMLVEGKQ).

It belongs to the CUEDC2 family. In terms of assembly, interacts with PGR and ESR1.

It localises to the cytoplasm. The protein localises to the nucleus. Its function is as follows. Controls PGR and ESR1 protein levels through their targeting for ubiquitination and subsequent proteasomal degradation. The polypeptide is CUE domain-containing protein 2 (CUEDC2) (Bos taurus (Bovine)).